The primary structure comprises 130 residues: Small ribosomal subunit protein uS11 (130 aa).

The protein belongs to the universal ribosomal protein uS11 family. Part of the 30S ribosomal subunit. Interacts with proteins S7 and S18. Binds to IF-3.

In terms of biological role, located on the platform of the 30S subunit, it bridges several disparate RNA helices of the 16S rRNA. Forms part of the Shine-Dalgarno cleft in the 70S ribosome. This Teredinibacter turnerae (strain ATCC 39867 / T7901) protein is Small ribosomal subunit protein uS11.